An 809-amino-acid chain; its full sequence is Chorion peroxidase (809 aa).

Positions 1 to 21 are cleaved as a signal peptide; sequence MSRILFILLLLIVTQLSELQA. Residues 22–223 constitute a propeptide that is removed on maturation; the sequence is AAFSVRQNRF…KFTETPLAHH (202 aa). The interval 36 to 55 is disordered; it reads DLQTPAPLATSTESSKKPEK. N-linked (GlcNAc...) asparagine glycosylation occurs at asparagine 110. Cysteine 224 is subject to N-acetylcysteine; in Chorion peroxidase light chain. Cysteine 230 and cysteine 244 are disulfide-bonded. Histidine 320 (proton acceptor) is an active-site residue. A disulfide bond links cysteine 448 and cysteine 457. Residue histidine 568 coordinates heme b. Cysteines 765 and 794 form a disulfide.

This sequence belongs to the peroxidase family. XPO subfamily. In terms of assembly, heterodimer. Heme b serves as cofactor. Expressed at low levels in the germarium and early follicles. Expression becomes progressively stronger during vitellogenesis, and is highly expressed in germ cells and somatic cells. A subset of follicle cells, termed border cells (BC), exhibit a high level of expression.

The protein resides in the secreted. The catalysed reaction is 2 a phenolic donor + H2O2 = 2 a phenolic radical donor + 2 H2O. In terms of biological role, required for ovarian follicle maturation. Involved in the formation of a rigid and insoluble egg chorion by catalyzing chorion protein cross-linking through dityrosine formation and phenol oxidase-catalyzed chorion melanization. This Drosophila melanogaster (Fruit fly) protein is Chorion peroxidase (Pxt).